We begin with the raw amino-acid sequence, 291 residues long: Insulin-like growth factor-binding protein 3 (291 aa).

An N-terminal signal peptide occupies residues 1–27; sequence MLRARPALWAAALTALTLLRGPPAARA. Positions 28-134 are IGF-binding; that stretch reads GAGTMGAGPV…LRPYLLPSAS (107 aa). Residues 36-119 form the IGFBP N-terminal domain; sequence PVVRCEPCDA…LDGRGLCANA (84 aa). Intrachain disulfides connect Cys40/Cys69, Cys43/Cys71, Cys51/Cys72, Cys60/Cys75, Cys83/Cys96, and Cys90/Cys116. N-linked (GlcNAc...) asparagine glycans are attached at residues Asn118 and Asn136. Disordered regions lie at residues 132 to 162 and 177 to 211; these read SASGNGSESEEDHSMGSTENQAGPSTHRVPV and KGHAKDSQRYKVDYESQSTDTQNFSSESKRETEYG. Polar residues predominate over residues 146 to 155; it reads MGSTENQAGP. Ser148 is modified (phosphoserine). The span at 177 to 190 shows a compositional bias: basic and acidic residues; the sequence is KGHAKDSQRYKVDY. Polar residues predominate over residues 191-202; the sequence is ESQSTDTQNFSS. An N-linked (GlcNAc...) asparagine glycan is attached at Asn199. Phosphoserine is present on Ser201. The Thyroglobulin type-1 domain maps to 210 to 285; the sequence is YGPCRREMED…DVKGKGDVHC (76 aa). Disulfide bonds link Cys213–Cys240, Cys251–Cys262, and Cys264–Cys285.

In terms of assembly, interacts with XLKD1. Binds IGF2 more than IGF1. Forms a ternary complex of about 140 to 150 kDa with IGF1 or IGF2 and a 85 kDa glycoprotein (ALS). Interacts with humanin; humanin competes with importin KPNB1 for binding to IGFBP3, blocking IGFBP3 nuclear import and IGFBP3-mediated apoptosis. Interacts with TMEM219. Interacts with RXRA; this interaction modulates the transcriptional activity of RXRA. Interacts with LRP1; this interaction mediates cell growth inhibition independent of IGF1. In terms of processing, phosphorylated by FAM20C in the extracellular medium. Phosphorylated by CK2; resulting in decreased nuclear localization. Plasma; expressed by most tissues.

It is found in the secreted. The protein resides in the nucleus. Multifunctional protein that plays a critical role in regulating the availability of IGFs such as IGF1 and IGF2 to their receptors and thereby regulates IGF-mediated cellular processes including proliferation, differentiation, and apoptosis in a cell-type specific manner. Also exhibits IGF-independent antiproliferative and apoptotic effects mediated by its receptor TMEM219/IGFBP-3R. Inhibits the positive effect of humanin on insulin sensitivity. Promotes testicular germ cell apoptosis. Acts via LRP-1/alpha2M receptor, also known as TGF-beta type V receptor, to mediate cell growth inhibition independent of IGF1. Mechanistically, induces serine-specific dephosphorylation of IRS1 or IRS2 upon ligation to its receptor, leading to the inhibitory cascade. In the nucleus, interacts with transcription factors such as retinoid X receptor-alpha/RXRA to regulate transcriptional signaling and apoptosis. The sequence is that of Insulin-like growth factor-binding protein 3 (IGFBP3) from Bos taurus (Bovine).